The following is a 465-amino-acid chain: Cysteine--tRNA ligase (465 aa).

Cys-27 is a binding site for Zn(2+). Residues 29–39 carry the 'HIGH' region motif; the sequence is PTVYDDAHLGH. Cys-207, His-237, and Glu-241 together coordinate Zn(2+). Residues 269-273 carry the 'KMSKS' region motif; sequence KMSKS. ATP is bound at residue Lys-272.

It belongs to the class-I aminoacyl-tRNA synthetase family. As to quaternary structure, monomer. Zn(2+) is required as a cofactor.

It localises to the cytoplasm. It catalyses the reaction tRNA(Cys) + L-cysteine + ATP = L-cysteinyl-tRNA(Cys) + AMP + diphosphate. The protein is Cysteine--tRNA ligase of Helicobacter pylori (strain HPAG1).